A 424-amino-acid polypeptide reads, in one-letter code: Type II methyltransferase M.XorII (424 aa).

Residues Pro-4–Lys-367 enclose the SAM-dependent MTase C5-type domain. The active site involves Cys-83. The interval Arg-404–Ala-424 is disordered. Over residues Arg-406 to Ala-424 the composition is skewed to basic and acidic residues.

It belongs to the class I-like SAM-binding methyltransferase superfamily. C5-methyltransferase family.

The enzyme catalyses a 2'-deoxycytidine in DNA + S-adenosyl-L-methionine = a 5-methyl-2'-deoxycytidine in DNA + S-adenosyl-L-homocysteine + H(+). In terms of biological role, a methylase that recognizes the double-stranded sequence 5'-CGATCG-3', methylates C-? on both strands and protects the DNA from cleavage by the XorII endonuclease. This chain is Type II methyltransferase M.XorII (xorIIM), found in Xanthomonas oryzae pv. oryzae (strain KACC10331 / KXO85).